A 451-amino-acid chain; its full sequence is MGKYFGTSGIREVVNEKLTPELALKVGLALGTYLNGGRVVIGNDTRTSSEMLKKAVISGLLASGVDVIDIGLAPTPLVGFAIKLYDADAGVTITASHNPPEYNGIKVWDRNGMAYTPEKERELERIIEEEKFKRAPWNEIGQLKQANPREEYIEAIMKEIKLDNSYTVVIDPGNGAGSIISPYLHRELGNRVITINSDPHGFFVRELEPNKESLSMLAKTVKALKADIGIAHDGDADRVGVVDENGEFVEYEVMLSLIAGYMLRKYGKGKVVTTVDAGFALDDYVRGLGGEVVRTRVGDVAVAEELMKHGGVFGGEPSGTWIMPQWNLTPDGIFAGALVLEMIDRLGLIGELAKEVPRYVTLRKKIPCPNDLKAKAMEEIAKLIPREFSYEREITIDGIRIENDDWWILFRPSGTEPIMRITLEAHTKERAESLMEKAEKLVKDAIKKASS.

Catalysis depends on Ser-96, which acts as the Phosphoserine intermediate. Residues Ser-96, Asp-233, Asp-235, and Asp-237 each contribute to the Mg(2+) site. Phosphoserine is present on Ser-96.

This sequence belongs to the phosphohexose mutase family. The cofactor is Mg(2+). Activated by phosphorylation.

It catalyses the reaction alpha-D-glucosamine 1-phosphate = D-glucosamine 6-phosphate. Its function is as follows. Catalyzes the conversion of glucosamine-6-phosphate to glucosamine-1-phosphate. This chain is Probable phosphoglucosamine mutase, found in Pyrococcus abyssi (strain GE5 / Orsay).